A 181-amino-acid chain; its full sequence is Acireductone dioxygenase (181 aa).

Positions 97, 99, 103, and 141 each coordinate Fe(2+). Ni(2+)-binding residues include H97, H99, E103, and H141.

It belongs to the acireductone dioxygenase (ARD) family. Monomer. Fe(2+) serves as cofactor. Ni(2+) is required as a cofactor.

It carries out the reaction 1,2-dihydroxy-5-(methylsulfanyl)pent-1-en-3-one + O2 = 3-(methylsulfanyl)propanoate + CO + formate + 2 H(+). The enzyme catalyses 1,2-dihydroxy-5-(methylsulfanyl)pent-1-en-3-one + O2 = 4-methylsulfanyl-2-oxobutanoate + formate + 2 H(+). The protein operates within amino-acid biosynthesis; L-methionine biosynthesis via salvage pathway; L-methionine from S-methyl-5-thio-alpha-D-ribose 1-phosphate: step 5/6. In terms of biological role, catalyzes 2 different reactions between oxygen and the acireductone 1,2-dihydroxy-3-keto-5-methylthiopentene (DHK-MTPene) depending upon the metal bound in the active site. Fe-containing acireductone dioxygenase (Fe-ARD) produces formate and 2-keto-4-methylthiobutyrate (KMTB), the alpha-ketoacid precursor of methionine in the methionine recycle pathway. Ni-containing acireductone dioxygenase (Ni-ARD) produces methylthiopropionate, carbon monoxide and formate, and does not lie on the methionine recycle pathway. This Pseudomonas fluorescens (strain ATCC BAA-477 / NRRL B-23932 / Pf-5) protein is Acireductone dioxygenase.